The primary structure comprises 343 residues: Aspartate beta-hydroxylase domain-containing protein 2 (343 aa).

Over 1–31 (MWLEWLVAWSWSLDGLRDCIATGIQSVRDCD) the chain is Cytoplasmic. Residues 32-52 (GTAVITVACLLVLFVWYCYHV) form a helical membrane-spanning segment. Topologically, residues 53–343 (GREQPRPHVS…ALDFIFAPGR (291 aa)) are lumenal. N-linked (GlcNAc...) asparagine glycans are attached at residues Asn-77 and Asn-185. 2-oxoglutarate contacts are provided by Trp-202 and Ser-246. Residue His-257 participates in Fe cation binding. 266–268 (RCH) contacts 2-oxoglutarate. His-302 contacts Fe cation. 2-oxoglutarate is bound at residue Arg-315.

The protein belongs to the aspartyl/asparaginyl beta-hydroxylase family. Fe cation is required as a cofactor.

Its subcellular location is the membrane. May function as 2-oxoglutarate-dependent dioxygenase. This chain is Aspartate beta-hydroxylase domain-containing protein 2 (Asphd2), found in Rattus norvegicus (Rat).